The primary structure comprises 1058 residues: Carbamoyl phosphate synthase large chain (1058 aa).

Residues 1–401 (MPKRTDIQKI…SLLKACRSLE (401 aa)) are carboxyphosphate synthetic domain. Residues Arg129, Arg169, Gly175, Gly176, Arg208, Ile210, Glu215, Gly241, Ile242, His243, Gln284, and Glu298 each coordinate ATP. The 195-residue stretch at 133–327 (KQLMEELEQP…IAKLAAKIAV (195 aa)) folds into the ATP-grasp 1 domain. Gln284, Glu298, and Asn300 together coordinate Mg(2+). The Mn(2+) site is built by Gln284, Glu298, and Asn300. The tract at residues 402-546 (IGVHHNEIPE…YSTYGWENES (145 aa)) is oligomerization domain. The carbamoyl phosphate synthetic domain stretch occupies residues 547–929 (IRSDKESVLV…ALYKAFEASY (383 aa)). An ATP-grasp 2 domain is found at 671–861 (EQALKELDIP…MAQVATKLIL (191 aa)). The ATP site is built by Arg707, Ser746, Ile748, Glu752, Gly777, Val778, His779, Ser780, Gln820, and Glu832. Mg(2+) contacts are provided by Gln820, Glu832, and Asn834. 3 residues coordinate Mn(2+): Gln820, Glu832, and Asn834. One can recognise an MGS-like domain in the interval 930 to 1058 (LHLPTFGNVV…ESRSFVTEAI (129 aa)). Residues 930–1058 (LHLPTFGNVV…ESRSFVTEAI (129 aa)) form an allosteric domain region.

Belongs to the CarB family. Composed of two chains; the small (or glutamine) chain promotes the hydrolysis of glutamine to ammonia, which is used by the large (or ammonia) chain to synthesize carbamoyl phosphate. Tetramer of heterodimers (alpha,beta)4. The cofactor is Mg(2+). Mn(2+) is required as a cofactor.

The enzyme catalyses hydrogencarbonate + L-glutamine + 2 ATP + H2O = carbamoyl phosphate + L-glutamate + 2 ADP + phosphate + 2 H(+). The catalysed reaction is hydrogencarbonate + NH4(+) + 2 ATP = carbamoyl phosphate + 2 ADP + phosphate + 2 H(+). It functions in the pathway amino-acid biosynthesis; L-arginine biosynthesis; carbamoyl phosphate from bicarbonate: step 1/1. Its pathway is pyrimidine metabolism; UMP biosynthesis via de novo pathway; (S)-dihydroorotate from bicarbonate: step 1/3. Its function is as follows. Large subunit of the glutamine-dependent carbamoyl phosphate synthetase (CPSase). CPSase catalyzes the formation of carbamoyl phosphate from the ammonia moiety of glutamine, carbonate, and phosphate donated by ATP, constituting the first step of 2 biosynthetic pathways, one leading to arginine and/or urea and the other to pyrimidine nucleotides. The large subunit (synthetase) binds the substrates ammonia (free or transferred from glutamine from the small subunit), hydrogencarbonate and ATP and carries out an ATP-coupled ligase reaction, activating hydrogencarbonate by forming carboxy phosphate which reacts with ammonia to form carbamoyl phosphate. This is Carbamoyl phosphate synthase large chain from Streptococcus pneumoniae (strain Hungary19A-6).